A 419-amino-acid chain; its full sequence is Creatine kinase S-type, mitochondrial (419 aa).

A mitochondrion-targeting transit peptide spans 1 to 39; sequence MASTFSKLLTGRNASLLFATLGTGALTTGYLLNKQNVCA. A cardiolipin-binding region spans residues 40 to 64; that stretch reads AAREQHKLFPPSADYPDLRKHNNCM. The Phosphagen kinase N-terminal domain maps to 46–132; the sequence is KLFPPSADYP…FDPVIKLRHN (87 aa). The Phosphagen kinase C-terminal domain maps to 159-401; the sequence is YVLSSRVRTG…NYLVDCEKKL (243 aa). ATP contacts are provided by residues 162-166 and His225; that span reads SSRVR. Tyr255 carries the phosphotyrosine modification. Residues Arg270, Arg326, 354 to 359, and Asp369 contribute to the ATP site; that span reads RGTGGV. Thr356 carries the phosphothreonine modification.

Belongs to the ATP:guanido phosphotransferase family. Exists as an octamer composed of four CKMT2 homodimers.

It is found in the mitochondrion inner membrane. It carries out the reaction creatine + ATP = N-phosphocreatine + ADP + H(+). Reversibly catalyzes the transfer of phosphate between ATP and various phosphogens (e.g. creatine phosphate). Creatine kinase isoenzymes play a central role in energy transduction in tissues with large, fluctuating energy demands, such as skeletal muscle, heart, brain and spermatozoa. The sequence is that of Creatine kinase S-type, mitochondrial (CKMT2) from Bos taurus (Bovine).